Consider the following 75-residue polypeptide: UPF0270 protein PFL_4336 (75 aa).

It belongs to the UPF0270 family.

In Pseudomonas fluorescens (strain ATCC BAA-477 / NRRL B-23932 / Pf-5), this protein is UPF0270 protein PFL_4336.